The chain runs to 632 residues: Mitoguardin 1 (632 aa).

Residues 70 to 90 (PVAKKLFVVTAVSAISVIFLA) traverse the membrane as a helical segment. A phosphoserine mark is found at S289 and S293.

This sequence belongs to the mitoguardin family. As to quaternary structure, homodimer and heterodimer; forms heterodimers with MIGA2. Interacts with PLD6/MitoPLD.

The protein localises to the mitochondrion outer membrane. Regulator of mitochondrial fusion: acts by forming homo- and heterodimers at the mitochondrial outer membrane and facilitating the formation of PLD6/MitoPLD dimers. May act by regulating phospholipid metabolism via PLD6/MitoPLD. This chain is Mitoguardin 1, found in Homo sapiens (Human).